We begin with the raw amino-acid sequence, 338 residues long: Terpene synthase 1 (338 aa).

Positions 80–85 match the DDxx(x)D/E motif motif; that stretch reads DDALDS. The NDxxSxxxD/E motif motif lies at 220-228; sequence NDLVSYEKE.

Belongs to the terpene synthase family.

The catalysed reaction is (2E,6E)-farnesyl diphosphate = (2S,3R,6S,9S)-(-)-protoillud-7-ene + diphosphate. Functionally, terpene synthase that converts its substrate farnesyl diphosphate (FPP) into the sesquiterpene protoillud-7-ene. In Cavenderia fasciculata (Slime mold), this protein is Terpene synthase 1.